The chain runs to 411 residues: Arginine deiminase (411 aa).

The active-site Amidino-cysteine intermediate is Cys-401.

It belongs to the arginine deiminase family.

It localises to the cytoplasm. The catalysed reaction is L-arginine + H2O = L-citrulline + NH4(+). It functions in the pathway amino-acid degradation; L-arginine degradation via ADI pathway; carbamoyl phosphate from L-arginine: step 1/2. This Streptococcus equi subsp. equi (strain 4047) protein is Arginine deiminase.